The chain runs to 99 residues: Large ribosomal subunit protein eL30 (99 aa).

This sequence belongs to the eukaryotic ribosomal protein eL30 family.

The sequence is that of Large ribosomal subunit protein eL30 (rpl30e) from Pyrococcus horikoshii (strain ATCC 700860 / DSM 12428 / JCM 9974 / NBRC 100139 / OT-3).